The sequence spans 257 residues: GTP cyclohydrolase 1 type 2 homolog (257 aa).

Positions 65, 103, 221, and 224 each coordinate a divalent metal cation.

This sequence belongs to the GTP cyclohydrolase I type 2/NIF3 family. In terms of assembly, homohexamer.

The chain is GTP cyclohydrolase 1 type 2 homolog (ykiD) from Lactococcus lactis subsp. lactis (strain IL1403) (Streptococcus lactis).